A 251-amino-acid chain; its full sequence is HTH-type transcriptional regulator UlaR (251 aa).

Residues 3–58 (EAQRHQILLEMLAQLGFVTVEKVVERLGISPATARRDINKLDESGKLKKVRNGAEA) form the HTH deoR-type domain. Residues 20-39 (VTVEKVVERLGISPATARRD) constitute a DNA-binding region (H-T-H motif).

It localises to the cytoplasm. Its function is as follows. Represses ulaG and the ulaABCDEF operon. The polypeptide is HTH-type transcriptional regulator UlaR (Escherichia coli O127:H6 (strain E2348/69 / EPEC)).